We begin with the raw amino-acid sequence, 172 residues long: Macro domain-containing protein CT2219 (172 aa).

Residues 1-172 (MPDNVLIHAI…DVYQKALAAG (172 aa)) enclose the Macro domain.

This sequence belongs to the MacroD-type family.

This Chlorobaculum tepidum (strain ATCC 49652 / DSM 12025 / NBRC 103806 / TLS) (Chlorobium tepidum) protein is Macro domain-containing protein CT2219.